A 159-amino-acid chain; its full sequence is Insulin-like peptide 7 (159 aa).

Positions 1 to 31 (MTRMIIQNSGSWTLCGAVLLFVLPLIPTPEA) are cleaved as a signal peptide. 3 cysteine pairs are disulfide-bonded: cysteine 63/cysteine 136, cysteine 75/cysteine 150, and cysteine 135/cysteine 141. A propeptide spans 90 to 121 (TGNDEAWIKKTTTEPDGSTWLHVNYANMFLRS) (connecting peptide).

This sequence belongs to the insulin family. As to quaternary structure, heterodimer of a B chain and an A chain linked by two disulfide bonds. In terms of tissue distribution, broadly expressed at a low level throughout the embryo, except the yolk. Expressed at a moderate level in the embryonic midgut. Larval expression is restricted to ten cells of the ventral nerve cord - in four pairs of centrally located cells in the most posterior abdominal segments and in one pair of dorsally located cells in the A1 or A2 segments.

It localises to the secreted. Possible ligand of InR/insulin-like receptor. The protein is Insulin-like peptide 7 of Drosophila melanogaster (Fruit fly).